The sequence spans 1417 residues: DNA-directed RNA polymerase subunit beta' (1417 aa).

Residues Cys-68, Cys-70, Cys-83, and Cys-86 each coordinate Zn(2+). Residues Asp-458, Asp-460, and Asp-462 each coordinate Mg(2+). The Zn(2+) site is built by Cys-811, Cys-884, Cys-891, and Cys-894.

It belongs to the RNA polymerase beta' chain family. The RNAP catalytic core consists of 2 alpha, 1 beta, 1 beta' and 1 omega subunit. When a sigma factor is associated with the core the holoenzyme is formed, which can initiate transcription. Mg(2+) is required as a cofactor. Zn(2+) serves as cofactor.

It carries out the reaction RNA(n) + a ribonucleoside 5'-triphosphate = RNA(n+1) + diphosphate. Its function is as follows. DNA-dependent RNA polymerase catalyzes the transcription of DNA into RNA using the four ribonucleoside triphosphates as substrates. The protein is DNA-directed RNA polymerase subunit beta' of Francisella tularensis subsp. tularensis (strain FSC 198).